Here is a 230-residue protein sequence, read N- to C-terminus: Leucyl/phenylalanyl-tRNA--protein transferase (230 aa).

The protein belongs to the L/F-transferase family.

Its subcellular location is the cytoplasm. The enzyme catalyses N-terminal L-lysyl-[protein] + L-leucyl-tRNA(Leu) = N-terminal L-leucyl-L-lysyl-[protein] + tRNA(Leu) + H(+). It carries out the reaction N-terminal L-arginyl-[protein] + L-leucyl-tRNA(Leu) = N-terminal L-leucyl-L-arginyl-[protein] + tRNA(Leu) + H(+). It catalyses the reaction L-phenylalanyl-tRNA(Phe) + an N-terminal L-alpha-aminoacyl-[protein] = an N-terminal L-phenylalanyl-L-alpha-aminoacyl-[protein] + tRNA(Phe). Functionally, functions in the N-end rule pathway of protein degradation where it conjugates Leu, Phe and, less efficiently, Met from aminoacyl-tRNAs to the N-termini of proteins containing an N-terminal arginine or lysine. The protein is Leucyl/phenylalanyl-tRNA--protein transferase of Hamiltonella defensa subsp. Acyrthosiphon pisum (strain 5AT).